The following is a 249-amino-acid chain: Ubiquinone biosynthesis O-methyltransferase (249 aa).

The tract at residues 1–23 (MTSPSQVLPASAGKPTGPNADPK) is disordered. The S-adenosyl-L-methionine site is built by Arg52, Gly71, Asp92, and Met136.

This sequence belongs to the methyltransferase superfamily. UbiG/COQ3 family.

It catalyses the reaction a 3-demethylubiquinol + S-adenosyl-L-methionine = a ubiquinol + S-adenosyl-L-homocysteine + H(+). The enzyme catalyses a 3-(all-trans-polyprenyl)benzene-1,2-diol + S-adenosyl-L-methionine = a 2-methoxy-6-(all-trans-polyprenyl)phenol + S-adenosyl-L-homocysteine + H(+). It participates in cofactor biosynthesis; ubiquinone biosynthesis. Its function is as follows. O-methyltransferase that catalyzes the 2 O-methylation steps in the ubiquinone biosynthetic pathway. The polypeptide is Ubiquinone biosynthesis O-methyltransferase (Cupriavidus pinatubonensis (strain JMP 134 / LMG 1197) (Cupriavidus necator (strain JMP 134))).